Consider the following 107-residue polypeptide: Large ribosomal subunit protein uL24 (107 aa).

This sequence belongs to the universal ribosomal protein uL24 family. As to quaternary structure, part of the 50S ribosomal subunit.

One of two assembly initiator proteins, it binds directly to the 5'-end of the 23S rRNA, where it nucleates assembly of the 50S subunit. Its function is as follows. One of the proteins that surrounds the polypeptide exit tunnel on the outside of the subunit. The chain is Large ribosomal subunit protein uL24 from Solidesulfovibrio magneticus (strain ATCC 700980 / DSM 13731 / RS-1) (Desulfovibrio magneticus).